Consider the following 437-residue polypeptide: Chromosomal replication initiator protein DnaA (437 aa).

The interval 1–82 (MIFPIWKKCL…KIIINIEKKK (82 aa)) is domain I, interacts with DnaA modulators. Residues 82–101 (KLEKKKCIYKKKNIQIYLHS) are domain II. The tract at residues 102–318 (EINKKYQFHN…GILKKIQILS (217 aa)) is domain III, AAA+ region. ATP contacts are provided by Gly-146, Gly-148, Lys-149, and Thr-150. A domain IV, binds dsDNA region spans residues 319-437 (ILNKEKITIN…FIYLFNQLNA (119 aa)).

This sequence belongs to the DnaA family. As to quaternary structure, oligomerizes as a right-handed, spiral filament on DNA at oriC.

It is found in the cytoplasm. Functionally, plays an essential role in the initiation and regulation of chromosomal replication. ATP-DnaA binds to the origin of replication (oriC) to initiate formation of the DNA replication initiation complex once per cell cycle. Binds the DnaA box (a 9 base pair repeat at the origin) and separates the double-stranded (ds)DNA. Forms a right-handed helical filament on oriC DNA; dsDNA binds to the exterior of the filament while single-stranded (ss)DNA is stabiized in the filament's interior. The ATP-DnaA-oriC complex binds and stabilizes one strand of the AT-rich DNA unwinding element (DUE), permitting loading of DNA polymerase. After initiation quickly degrades to an ADP-DnaA complex that is not apt for DNA replication. Binds acidic phospholipids. The chain is Chromosomal replication initiator protein DnaA from Buchnera aphidicola subsp. Cinara cedri (strain Cc).